The primary structure comprises 89 residues: Small ribosomal subunit protein uS15 (89 aa).

This sequence belongs to the universal ribosomal protein uS15 family. As to quaternary structure, part of the 30S ribosomal subunit. Forms a bridge to the 50S subunit in the 70S ribosome, contacting the 23S rRNA.

Its function is as follows. One of the primary rRNA binding proteins, it binds directly to 16S rRNA where it helps nucleate assembly of the platform of the 30S subunit by binding and bridging several RNA helices of the 16S rRNA. In terms of biological role, forms an intersubunit bridge (bridge B4) with the 23S rRNA of the 50S subunit in the ribosome. The chain is Small ribosomal subunit protein uS15 from Pectobacterium carotovorum subsp. carotovorum (strain PC1).